Reading from the N-terminus, the 140-residue chain is Transmembrane protein 107 (140 aa).

The next 2 membrane-spanning stretches (helical) occupy residues 7-27 and 53-73; these read LVPSRFLTLLAHLVVVITLFW and LVAALCLTLGLFAVELAGFLS. An N-linked (GlcNAc...) asparagine glycan is attached at N79. Transmembrane regions (helical) follow at residues 83–103 and 113–133; these read SLLSIAAHCSASVALSFFVFE and IFTFCSAFPAVTETALFIAVF.

In terms of assembly, part of the tectonic-like complex (also named B9 complex). Interacts with TMEM237, TMEM231, MKS1 and TMEM216.

Its subcellular location is the membrane. The protein localises to the cell projection. It localises to the cilium. Functionally, plays a role in cilia formation and embryonic patterning. Requires for normal Sonic hedgehog (Shh) signaling in the neural tube and acts in combination with GLI2 and GLI3 to pattern ventral and intermediate neuronal cell types. During ciliogenesis regulates the ciliary transition zone localization of some MKS complex proteins. This Mus musculus (Mouse) protein is Transmembrane protein 107.